A 759-amino-acid chain; its full sequence is Protein hunchback (759 aa).

Disordered stretches follow at residues 30–51 and 171–215; these read EPGHHLDGNSVASSPRQSPIPS and SSEK…EDMK. Residues 39–51 show a composition bias toward polar residues; that stretch reads SVASSPRQSPIPS. Threonine 179 carries the post-translational modification Phosphothreonine. Residues serine 189, serine 208, serine 210, and serine 211 each carry the phosphoserine modification. The span at 199 to 215 shows a compositional bias: basic and acidic residues; it reads EPEKEHDQMSNSSEDMK. C2H2-type zinc fingers lie at residues 241 to 263, 270 to 292, 298 to 320, and 326 to 350; these read YKCKTCGVVAITKVDFWAHTRTH, LQCPKCPFVTEFKHHLEYHIRKH, FQCDKCSYTCVNKSMLNSHRKSH, and YRCADCDYATKYCHSFKLHLRKYGH. 3 disordered regions span residues 366-419, 513-565, and 606-696; these read LVID…TSQL, QLQQ…PQQP, and MTSP…APAS. 2 stretches are compositionally biased toward low complexity: residues 399–419 and 513–522; these read VAAVAPQQQQSQPAQPATSQL and QLQQQNQQQS. A compositionally biased stretch (acidic residues) spans 523 to 532; sequence DNEEEEQDDE. Phosphoserine occurs at positions 537 and 540. The segment covering 655-696 has biased composition (low complexity); sequence ANTSASSTASSSGNSSNASSNGNSSSNSSSNGTSSAAAAPAS. C2H2-type zinc fingers lie at residues 706–728 and 734–758; these read YECKYCDIFFKDAVLYTIHMGYH and FKCNMCGEKCDGPVGLFVHMARNAH.

It belongs to the hunchback C2H2-type zinc-finger protein family.

Its subcellular location is the nucleus. Gap class segmentation protein that controls development of head structures. This is Protein hunchback from Drosophila yakuba (Fruit fly).